Here is a 376-residue protein sequence, read N- to C-terminus: tRNA-specific 2-thiouridylase MnmA (376 aa).

ATP is bound by residues 16–23 and leucine 42; that span reads AMSGGVDS. Cysteine 111 (nucleophile) is an active-site residue. An intrachain disulfide couples cysteine 111 to cysteine 210. Residue glycine 135 coordinates ATP. Positions 158-160 are interaction with tRNA; it reads KDQ. The active-site Cysteine persulfide intermediate is cysteine 210.

The protein belongs to the MnmA/TRMU family.

Its subcellular location is the cytoplasm. It catalyses the reaction S-sulfanyl-L-cysteinyl-[protein] + uridine(34) in tRNA + AH2 + ATP = 2-thiouridine(34) in tRNA + L-cysteinyl-[protein] + A + AMP + diphosphate + H(+). Catalyzes the 2-thiolation of uridine at the wobble position (U34) of tRNA, leading to the formation of s(2)U34. In Streptomyces avermitilis (strain ATCC 31267 / DSM 46492 / JCM 5070 / NBRC 14893 / NCIMB 12804 / NRRL 8165 / MA-4680), this protein is tRNA-specific 2-thiouridylase MnmA.